The sequence spans 178 residues: Cytochrome b6-f complex iron-sulfur subunit 1 (178 aa).

Residues 17 to 36 (LLNFLAGTTVAVTASAGAYA) traverse the membrane as a helical segment. One can recognise a Rieske domain in the interval 61 to 161 (GNPIPASQIL…VAVVDDQIFI (101 aa)). Residues Cys107, His109, Cys125, and His128 each coordinate [2Fe-2S] cluster. The cysteines at positions 112 and 127 are disulfide-linked.

This sequence belongs to the Rieske iron-sulfur protein family. In terms of assembly, the 4 large subunits of the cytochrome b6-f complex are cytochrome b6, subunit IV (17 kDa polypeptide, PetD), cytochrome f and the Rieske protein, while the 4 small subunits are PetG, PetL, PetM and PetN. The complex functions as a dimer. [2Fe-2S] cluster is required as a cofactor.

The protein localises to the cellular thylakoid membrane. The enzyme catalyses 2 oxidized [plastocyanin] + a plastoquinol + 2 H(+)(in) = 2 reduced [plastocyanin] + a plastoquinone + 4 H(+)(out). In terms of biological role, component of the cytochrome b6-f complex, which mediates electron transfer between photosystem II (PSII) and photosystem I (PSI), cyclic electron flow around PSI, and state transitions. The protein is Cytochrome b6-f complex iron-sulfur subunit 1 of Synechocystis sp. (strain ATCC 27184 / PCC 6803 / Kazusa).